The sequence spans 518 residues: Subtilisin-like protease 1 (518 aa).

Residues 1–19 form the signal peptide; that stretch reads MGVFRFISISLAAVSAANA. A propeptide spanning residues 20 to 116 is cleaved from the precursor; that stretch reads AQILSMPHAQ…VEPDTIISVH (97 aa). The 82-residue stretch at 34-115 folds into the Inhibitor I9 domain; it reads SYIVMMKDDT…FVEPDTIISV (82 aa). The region spanning 126-400 is the Peptidase S8 domain; sequence SWGLARISNP…NVLINNGGAK (275 aa). Active-site charge relay system residues include Asp158 and His190. A disordered region spans residues 175 to 198; the sequence is GSNQVNDGDDRDGSGHGTHTSGTM. 2 N-linked (GlcNAc...) asparagine glycosylation sites follow: Asn233 and Asn251. The segment covering 282–294 has biased composition (polar residues); the sequence is NDNQDAQSSSPAS. The segment at 282–312 is disordered; that stretch reads NDNQDAQSSSPASEPSVCTVGSSAEDDSRSS. Catalysis depends on Ser345, which acts as the Charge relay system. Polar residues predominate over residues 378-394; sequence TSSITDAGPGTPTNVLI. Positions 378–496 are disordered; sequence TSSITDAGPG…PYPGGDNFDF (119 aa). 2 stretches are compositionally biased toward pro residues: residues 405–470 and 478–487; these read NPNP…PGEP and APAPQHPHTP.

This sequence belongs to the peptidase S8 family.

Its subcellular location is the secreted. Functionally, secreted subtilisin-like serine protease with keratinolytic activity that contributes to pathogenicity. The sequence is that of Subtilisin-like protease 1 (SUB1) from Trichophyton verrucosum (strain HKI 0517).